Consider the following 309-residue polypeptide: Testis-expressed protein 264 homolog (309 aa).

The Lumenal segment spans residues 1–3 (MPD). A helical; Signal-anchor for type III membrane protein membrane pass occupies residues 4–24 (LLLLGLIGALTLLLLLTLLAF). Topologically, residues 25–309 (AGYSGLLTGV…ELSTPERGEE (285 aa)) are cytoplasmic. Residues 193–309 (PEVKETERKC…ELSTPERGEE (117 aa)) form a disordered region. A compositionally biased stretch (low complexity) spans 208-225 (ATDTQTDGTGADTSDASS). Phosphoserine occurs at positions 238 and 243. The span at 250–262 (GWDDGDNRSEHSY) shows a compositional bias: basic and acidic residues. Positions 263–272 (SESGASGSSF) are enriched in low complexity. The short motif at 272 to 275 (FEEL) is the LIR motif element.

As to quaternary structure, interacts (via the LIR motif) with ATG8 family proteins MAP1LC3A, MAP1LC3B, GABARAP and GABARAPL1. Interacts with VCP/p97; bridging VCP/p97 to covalent DNA-protein cross-links (DPCs). Interacts with TOP1 (when sumoylated).

The protein resides in the endoplasmic reticulum membrane. It is found in the cytoplasmic vesicle. The protein localises to the autophagosome. It localises to the cytoplasm. Its subcellular location is the cytosol. The protein resides in the nucleus. It is found in the chromosome. Functionally, major reticulophagy (also called ER-phagy) receptor that acts independently of other candidate reticulophagy receptors to remodel subdomains of the endoplasmic reticulum into autophagosomes upon nutrient stress, which then fuse with lysosomes for endoplasmic reticulum turnover. The ATG8-containing isolation membrane (IM) cradles a tubular segment of TEX264-positive ER near a three-way junction, allowing the formation of a synapse of 2 juxtaposed membranes with trans interaction between the TEX264 and ATG8 proteins. Expansion of the IM would extend the capture of ER, possibly through a 'zipper-like' process involving continued trans TEX264-ATG8 interactions, until poorly understood mechanisms lead to the fission of relevant membranes and, ultimately, autophagosomal membrane closure. Also involved in the repair of covalent DNA-protein cross-links (DPCs) during DNA synthesis: acts by bridging VCP/p97 to covalent DNA-protein cross-links (DPCs) and initiating resolution of DPCs by SPRTN. The protein is Testis-expressed protein 264 homolog of Mus musculus (Mouse).